A 487-amino-acid chain; its full sequence is Chromosomal replication initiator protein DnaA (487 aa).

The segment at 1–79 (MEKSKNIWSL…GYNNIVIVFT (79 aa)) is domain I, interacts with DnaA modulators. The tract at residues 79 to 142 (TNQPPKTHSN…EEEPTNFKNP (64 aa)) is domain II. The segment at 143–359 (FLKKRYTFEN…AAVTKLKAYI (217 aa)) is domain III, AAA+ region. 4 residues coordinate ATP: G187, G189, K190, and T191. The segment at 360–487 (DLDNIEIDIE…TELMNKIKKN (128 aa)) is domain IV, binds dsDNA.

It belongs to the DnaA family. Oligomerizes as a right-handed, spiral filament on DNA at oriC.

Its subcellular location is the cytoplasm. Its function is as follows. Plays an essential role in the initiation and regulation of chromosomal replication. ATP-DnaA binds to the origin of replication (oriC) to initiate formation of the DNA replication initiation complex once per cell cycle. Binds the DnaA box (a 9 base pair repeat at the origin) and separates the double-stranded (ds)DNA. Forms a right-handed helical filament on oriC DNA; dsDNA binds to the exterior of the filament while single-stranded (ss)DNA is stabiized in the filament's interior. The ATP-DnaA-oriC complex binds and stabilizes one strand of the AT-rich DNA unwinding element (DUE), permitting loading of DNA polymerase. After initiation quickly degrades to an ADP-DnaA complex that is not apt for DNA replication. Binds acidic phospholipids. In Borreliella burgdorferi (strain ZS7) (Borrelia burgdorferi), this protein is Chromosomal replication initiator protein DnaA.